Reading from the N-terminus, the 61-residue chain is uncharacterized protein (61 aa).

The first 28 residues, 1-28, serve as a signal peptide directing secretion; that stretch reads MHRRARRMPMRPRRSKRVRNRYTMGTFA.

This is an uncharacterized protein from Mycobacterium tuberculosis (strain ATCC 25618 / H37Rv).